The chain runs to 87 residues: Small ribosomal subunit protein bS20 (87 aa).

The disordered stretch occupies residues 1–20 (MANHKSAEKRARQTIKKTER).

The protein belongs to the bacterial ribosomal protein bS20 family.

Binds directly to 16S ribosomal RNA. The sequence is that of Small ribosomal subunit protein bS20 from Campylobacter jejuni subsp. jejuni serotype O:2 (strain ATCC 700819 / NCTC 11168).